The following is an 819-amino-acid chain: Leucine--tRNA ligase (819 aa).

A 'HIGH' region motif is present at residues 42–53 (PYPSGAKLHIGH). A 'KMSKS' region motif is present at residues 578-582 (RMSKS). Lysine 581 contacts ATP.

The protein belongs to the class-I aminoacyl-tRNA synthetase family.

The protein resides in the cytoplasm. It catalyses the reaction tRNA(Leu) + L-leucine + ATP = L-leucyl-tRNA(Leu) + AMP + diphosphate. The sequence is that of Leucine--tRNA ligase from Caldanaerobacter subterraneus subsp. tengcongensis (strain DSM 15242 / JCM 11007 / NBRC 100824 / MB4) (Thermoanaerobacter tengcongensis).